We begin with the raw amino-acid sequence, 221 residues long: Endo-1,4-beta-xylanase A (221 aa).

A signal peptide spans Met-1–Ala-16. A GH11 domain is found at Pro-29 to Ser-221. Residue Glu-114 is the Nucleophile of the active site. The active-site Proton donor is the Glu-208.

Belongs to the glycosyl hydrolase 11 (cellulase G) family.

It localises to the secreted. The catalysed reaction is Endohydrolysis of (1-&gt;4)-beta-D-xylosidic linkages in xylans.. The protein operates within glycan degradation; xylan degradation. Functionally, endo-1,4-beta-xylanase involved in the hydrolysis of xylan, a major structural heterogeneous polysaccharide found in plant biomass representing the second most abundant polysaccharide in the biosphere, after cellulose. In Aureobasidium pullulans (Black yeast), this protein is Endo-1,4-beta-xylanase A (xynA).